Reading from the N-terminus, the 215-residue chain is A-type ATP synthase subunit E (215 aa).

This sequence belongs to the V-ATPase E subunit family. In terms of assembly, has multiple subunits with at least A(3), B(3), C, D, E, F, H, I and proteolipid K(x).

Its subcellular location is the cell membrane. In terms of biological role, component of the A-type ATP synthase that produces ATP from ADP in the presence of a proton gradient across the membrane. This chain is A-type ATP synthase subunit E, found in Thermofilum pendens (strain DSM 2475 / Hrk 5).